Here is a 173-residue protein sequence, read N- to C-terminus: uncharacterized protein (173 aa).

An N-terminal signal peptide occupies residues methionine 1–alanine 25.

This is an uncharacterized protein from Mycobacterium bovis (strain ATCC BAA-935 / AF2122/97).